The sequence spans 198 residues: Phosphoheptose isomerase (198 aa).

In terms of domain architecture, SIS spans 36 to 198 (MARALGADRK…DRTLFGGPGG (163 aa)). 51–53 (NGG) is a substrate binding site. 2 residues coordinate Zn(2+): His-60 and Glu-64. Substrate-binding positions include Glu-64, 93–94 (ND), 119–121 (STS), Ser-124, and Gln-174. Positions 174 and 182 each coordinate Zn(2+).

It belongs to the SIS family. GmhA subfamily. In terms of assembly, homotetramer. Requires Zn(2+) as cofactor.

The protein resides in the cytoplasm. It catalyses the reaction 2 D-sedoheptulose 7-phosphate = D-glycero-alpha-D-manno-heptose 7-phosphate + D-glycero-beta-D-manno-heptose 7-phosphate. It participates in carbohydrate biosynthesis; D-glycero-D-manno-heptose 7-phosphate biosynthesis; D-glycero-alpha-D-manno-heptose 7-phosphate and D-glycero-beta-D-manno-heptose 7-phosphate from sedoheptulose 7-phosphate: step 1/1. Functionally, catalyzes the isomerization of sedoheptulose 7-phosphate in D-glycero-D-manno-heptose 7-phosphate. The chain is Phosphoheptose isomerase from Halorhodospira halophila (strain DSM 244 / SL1) (Ectothiorhodospira halophila (strain DSM 244 / SL1)).